The sequence spans 175 residues: ATP synthase subunit b 2 (175 aa).

The helical transmembrane segment at 20–40 threads the bilayer; it reads LIFWTTITFVLVLIILKKIAW.

It belongs to the ATPase B chain family. As to quaternary structure, F-type ATPases have 2 components, F(1) - the catalytic core - and F(0) - the membrane proton channel. F(1) has five subunits: alpha(3), beta(3), gamma(1), delta(1), epsilon(1). F(0) has four main subunits: a(1), b(2) and c(10-14). The alpha and beta chains form an alternating ring which encloses part of the gamma chain. F(1) is attached to F(0) by a central stalk formed by the gamma and epsilon chains, while a peripheral stalk is formed by the delta and b chains.

The protein localises to the cell inner membrane. F(1)F(0) ATP synthase produces ATP from ADP in the presence of a proton or sodium gradient. F-type ATPases consist of two structural domains, F(1) containing the extramembraneous catalytic core and F(0) containing the membrane proton channel, linked together by a central stalk and a peripheral stalk. During catalysis, ATP synthesis in the catalytic domain of F(1) is coupled via a rotary mechanism of the central stalk subunits to proton translocation. Functionally, component of the F(0) channel, it forms part of the peripheral stalk, linking F(1) to F(0). The polypeptide is ATP synthase subunit b 2 (Chlorobium luteolum (strain DSM 273 / BCRC 81028 / 2530) (Pelodictyon luteolum)).